Reading from the N-terminus, the 101-residue chain is Small ribosomal subunit protein uS14 (101 aa).

This sequence belongs to the universal ribosomal protein uS14 family. As to quaternary structure, part of the 30S ribosomal subunit. Contacts proteins S3 and S10.

In terms of biological role, binds 16S rRNA, required for the assembly of 30S particles and may also be responsible for determining the conformation of the 16S rRNA at the A site. This is Small ribosomal subunit protein uS14 from Hydrogenovibrio crunogenus (strain DSM 25203 / XCL-2) (Thiomicrospira crunogena).